The following is a 70-amino-acid chain: ATP synthase subunit c (70 aa).

A run of 2 helical transmembrane segments spans residues 3–23 and 44–64; these read ALAA…IGIA and LFFI…VIAI.

The protein belongs to the ATPase C chain family. F-type ATPases have 2 components, F(1) - the catalytic core - and F(0) - the membrane proton channel. F(1) has five subunits: alpha(3), beta(3), gamma(1), delta(1), epsilon(1). F(0) has three main subunits: a(1), b(2) and c(10-14). The alpha and beta chains form an alternating ring which encloses part of the gamma chain. F(1) is attached to F(0) by a central stalk formed by the gamma and epsilon chains, while a peripheral stalk is formed by the delta and b chains.

The protein resides in the cell membrane. Functionally, f(1)F(0) ATP synthase produces ATP from ADP in the presence of a proton or sodium gradient. F-type ATPases consist of two structural domains, F(1) containing the extramembraneous catalytic core and F(0) containing the membrane proton channel, linked together by a central stalk and a peripheral stalk. During catalysis, ATP synthesis in the catalytic domain of F(1) is coupled via a rotary mechanism of the central stalk subunits to proton translocation. In terms of biological role, key component of the F(0) channel; it plays a direct role in translocation across the membrane. A homomeric c-ring of between 10-14 subunits forms the central stalk rotor element with the F(1) delta and epsilon subunits. This Caldicellulosiruptor saccharolyticus (strain ATCC 43494 / DSM 8903 / Tp8T 6331) protein is ATP synthase subunit c.